The primary structure comprises 193 residues: Adenylate kinase (193 aa).

Residue 11–16 (GAGKGT) coordinates ATP. Residues 31–60 (STGDLLRAEVKAQTPLGCQAKVYMDAGELV) are NMP. AMP contacts are provided by residues threonine 32, arginine 37, 58 to 60 (ELV), 85 to 88 (GFPR), and glutamine 92. The tract at residues 126 to 136 (ARGKEQGRSDD) is LID. Arginine 127 provides a ligand contact to ATP. AMP is bound by residues arginine 133 and arginine 145. Glutamine 173 provides a ligand contact to ATP.

Belongs to the adenylate kinase family. Monomer.

It is found in the cytoplasm. The enzyme catalyses AMP + ATP = 2 ADP. Its pathway is purine metabolism; AMP biosynthesis via salvage pathway; AMP from ADP: step 1/1. In terms of biological role, catalyzes the reversible transfer of the terminal phosphate group between ATP and AMP. Plays an important role in cellular energy homeostasis and in adenine nucleotide metabolism. In Synechococcus sp. (strain JA-2-3B'a(2-13)) (Cyanobacteria bacterium Yellowstone B-Prime), this protein is Adenylate kinase.